The primary structure comprises 378 residues: tRNA-specific 2-thiouridylase MnmA (378 aa).

Residues 9-16 (GVSGGVDS) and Met-35 each bind ATP. Residues 94-96 (NPD) are interaction with target base in tRNA. Cys-99 (nucleophile) is an active-site residue. Cys-99 and Cys-195 are oxidised to a cystine. An ATP-binding site is contributed by Gly-123. Positions 145–147 (KDQ) are interaction with tRNA. The active-site Cysteine persulfide intermediate is Cys-195. The interval 307 to 308 (RY) is interaction with tRNA.

The protein belongs to the MnmA/TRMU family.

It is found in the cytoplasm. It carries out the reaction S-sulfanyl-L-cysteinyl-[protein] + uridine(34) in tRNA + AH2 + ATP = 2-thiouridine(34) in tRNA + L-cysteinyl-[protein] + A + AMP + diphosphate + H(+). Functionally, catalyzes the 2-thiolation of uridine at the wobble position (U34) of tRNA, leading to the formation of s(2)U34. In Xanthomonas euvesicatoria pv. vesicatoria (strain 85-10) (Xanthomonas campestris pv. vesicatoria), this protein is tRNA-specific 2-thiouridylase MnmA.